The sequence spans 155 residues: Aspartate carbamoyltransferase regulatory chain (155 aa).

Cys-109, Cys-114, Cys-138, and Cys-141 together coordinate Zn(2+).

This sequence belongs to the PyrI family. Contains catalytic and regulatory chains. Zn(2+) is required as a cofactor.

In terms of biological role, involved in allosteric regulation of aspartate carbamoyltransferase. In Vibrio cholerae serotype O1 (strain ATCC 39315 / El Tor Inaba N16961), this protein is Aspartate carbamoyltransferase regulatory chain.